The primary structure comprises 325 residues: Thiamine-monophosphate kinase (325 aa).

4 residues coordinate Mg(2+): aspartate 30, serine 45, threonine 46, and aspartate 47. Histidine 54 is a binding site for substrate. Positions 75 and 122 each coordinate Mg(2+). ATP-binding positions include 121–122 (GD) and arginine 146. Position 212 (aspartate 212) interacts with Mg(2+). Serine 214 lines the ATP pocket. Aspartate 215 is a binding site for Mg(2+). Substrate contacts are provided by glutamate 263 and tyrosine 319.

It belongs to the thiamine-monophosphate kinase family.

The catalysed reaction is thiamine phosphate + ATP = thiamine diphosphate + ADP. The protein operates within cofactor biosynthesis; thiamine diphosphate biosynthesis; thiamine diphosphate from thiamine phosphate: step 1/1. Functionally, catalyzes the ATP-dependent phosphorylation of thiamine-monophosphate (TMP) to form thiamine-pyrophosphate (TPP), the active form of vitamin B1. This is Thiamine-monophosphate kinase (thiL) from Salmonella typhimurium (strain LT2 / SGSC1412 / ATCC 700720).